The following is a 373-amino-acid chain: Septin homolog spn3 (373 aa).

Residues Lys10–Thr286 form the Septin-type G domain. A G1 motif region spans residues Gly20–Thr27. Gly20 to Thr27 is a binding site for GTP. The interval Asp79–His82 is G3 motif. Residues Ala161–Asp164 form a G4 motif region. Residues Lys162 to Glu170 and Arg235 contribute to the GTP site. Ser303 is subject to Phosphoserine. Residues Glu311 to Ser357 adopt a coiled-coil conformation.

This sequence belongs to the TRAFAC class TrmE-Era-EngA-EngB-Septin-like GTPase superfamily. Septin GTPase family. As to quaternary structure, component of the septin complex composed of two copies of each spn1, spn2, spn3 and spn4.

The protein localises to the cytoplasm. It localises to the cell cortex. Its function is as follows. Plays a role in the cell cycle. Involved in a late stage of septum formation leading to the separation of the daughter cells. The protein is Septin homolog spn3 (spn3) of Schizosaccharomyces pombe (strain 972 / ATCC 24843) (Fission yeast).